A 32-amino-acid chain; its full sequence is SAPQSIWYGPDRPKNRELEVIHSRFGEAVWFK.

Residues E19 and H22 each coordinate chlorophyll a. R24 lines the chlorophyll b pocket.

This sequence belongs to the light-harvesting chlorophyll a/b-binding (LHC) protein family. In terms of assembly, the LHC complex consists of chlorophyll a-b binding proteins. Requires Binds at least 14 chlorophylls (8 Chl-a and 6 Chl-b) and carotenoids such as lutein and neoxanthin. as cofactor. In terms of processing, photoregulated by reversible phosphorylation of its threonine residues.

It localises to the plastid. The protein resides in the chloroplast thylakoid membrane. Its function is as follows. The light-harvesting complex (LHC) functions as a light receptor, it captures and delivers excitation energy to photosystems with which it is closely associated. This Populus euphratica (Euphrates poplar) protein is Chlorophyll a-b binding protein 2, chloroplastic.